A 1432-amino-acid polypeptide reads, in one-letter code: ABC transporter B family member 3 (1432 aa).

2 disordered regions span residues 1–21 and 48–149; these read MDDG…EEEI and ITQP…KTEE. Composition is skewed to low complexity over residues 52–62, 76–106, and 118–135; these read SNNNNNSNNNN, NNNN…FNNN, and NTNE…NNND. The stretch at 117–163 forms a coiled coil; the sequence is ENTNENNNKNNNNNNNNNDDYNDGADERVKTEEEIKKEAENELNQSV. Positions 180–479 constitute an ABC transmembrane type-1 1 domain; that stretch reads MFLGTIAAVI…ASPCLALFAQ (300 aa). The next 6 helical transmembrane spans lie at 185–205, 232–252, 303–323, 325–345, 410–430, and 457–477; these read IAAV…GLVV, LLML…LWMI, KVGR…IGFT, GWQL…GGFF, GLGL…AFWY, and FFAV…LALF. In terms of domain architecture, ABC transporter 1 spans 514 to 750; that stretch reads IEFKDVGFHY…QGLYFDLVEK (237 aa). Position 549 to 556 (549 to 556) interacts with ATP; it reads GDSGGGKS. Residues 787 to 819 are disordered; that stretch reads KRSLRKNESESNKKDKEDSNNKKKKKSNKKKVE. Residues 791–807 show a composition bias toward basic and acidic residues; sequence RKNESESNKKDKEDSNN. The ABC transmembrane type-1 2 domain maps to 837–1157; it reads WCFGFLSAVG…ASSFAPDLAK (321 aa). 6 helical membrane passes run 838-858, 882-902, 968-988, 989-1009, 1060-1080, and 1134-1154; these read CFGF…AMVF, LMFV…GFLF, MVGG…VIIA, CFPL…GFSS, ISGF…CLSF, and VFFA…FAPD. Positions 1192–1428 constitute an ABC transporter 2 domain; the sequence is IEFKNLHFSY…EGPYSQLWYN (237 aa). An ATP-binding site is contributed by 1227 to 1234; it reads GDSGGGKS.

Belongs to the ABC transporter superfamily. ABCB family. Multidrug resistance exporter (TC 3.A.1.201) subfamily.

It localises to the membrane. The protein is ABC transporter B family member 3 (abcB3) of Dictyostelium discoideum (Social amoeba).